The sequence spans 209 residues: Adenylate kinase (209 aa).

Residue 10-15 participates in ATP binding; it reads GAGKGT. The tract at residues 30–59 is NMP; sequence STGDLFRAAIKEQTDLGKKVKAVIDSGALV. AMP is bound by residues Thr31, Arg36, 57-59, 85-88, and Gln92; these read ALV and GFPR. An LID region spans residues 121–158; the sequence is GRRVCSSCGQSFHIEFVKPKKEGICDSCSGDLMIRPDD. Position 122 (Arg122) interacts with ATP. Positions 125 and 128 each coordinate Zn(2+). 131–132 contacts ATP; that stretch reads SF. Zn(2+) is bound by residues Cys145 and Cys148. AMP contacts are provided by Arg155 and Arg166. Pro194 is an ATP binding site.

The protein belongs to the adenylate kinase family. In terms of assembly, monomer.

It is found in the cytoplasm. It catalyses the reaction AMP + ATP = 2 ADP. It participates in purine metabolism; AMP biosynthesis via salvage pathway; AMP from ADP: step 1/1. Its function is as follows. Catalyzes the reversible transfer of the terminal phosphate group between ATP and AMP. Plays an important role in cellular energy homeostasis and in adenine nucleotide metabolism. The sequence is that of Adenylate kinase from Treponema denticola (strain ATCC 35405 / DSM 14222 / CIP 103919 / JCM 8153 / KCTC 15104).